We begin with the raw amino-acid sequence, 252 residues long: 2-succinyl-6-hydroxy-2,4-cyclohexadiene-1-carboxylate synthase (252 aa).

It belongs to the AB hydrolase superfamily. MenH family. As to quaternary structure, monomer.

It carries out the reaction 5-enolpyruvoyl-6-hydroxy-2-succinyl-cyclohex-3-ene-1-carboxylate = (1R,6R)-6-hydroxy-2-succinyl-cyclohexa-2,4-diene-1-carboxylate + pyruvate. The protein operates within quinol/quinone metabolism; 1,4-dihydroxy-2-naphthoate biosynthesis; 1,4-dihydroxy-2-naphthoate from chorismate: step 3/7. Its pathway is quinol/quinone metabolism; menaquinone biosynthesis. Its function is as follows. Catalyzes a proton abstraction reaction that results in 2,5-elimination of pyruvate from 2-succinyl-5-enolpyruvyl-6-hydroxy-3-cyclohexene-1-carboxylate (SEPHCHC) and the formation of 2-succinyl-6-hydroxy-2,4-cyclohexadiene-1-carboxylate (SHCHC). The polypeptide is 2-succinyl-6-hydroxy-2,4-cyclohexadiene-1-carboxylate synthase (Salmonella choleraesuis (strain SC-B67)).